The following is a 148-amino-acid chain: MSSSKRIAKELSDLERDPPTSCSAGPVGDDLYHWQASIMGPADSPYAGGVFFLSIHFPTDYPFKPPKISFTTKIYHPNINANGNICLDILKDQWSPALTLSKVLLSICSLLTDANPDDPLVPEIAHIYKTDRPKYEATAREWTKKYAV.

Residues 1–22 form a disordered region; that stretch reads MSSSKRIAKELSDLERDPPTSC. A UBC core domain is found at 2–148; sequence SSSKRIAKEL…AREWTKKYAV (147 aa). Residues 7–18 show a composition bias toward basic and acidic residues; that stretch reads IAKELSDLERDP. The residue at position 12 (Ser-12) is a Phosphoserine. Cys-86 acts as the Glycyl thioester intermediate in catalysis. Lys-91 participates in a covalent cross-link: Glycyl lysine isopeptide (Lys-Gly) (interchain with G-Cter in ubiquitin).

The protein belongs to the ubiquitin-conjugating enzyme family. Interacts with TUL1. Post-translationally, the N-terminus is blocked.

The catalysed reaction is S-ubiquitinyl-[E1 ubiquitin-activating enzyme]-L-cysteine + [E2 ubiquitin-conjugating enzyme]-L-cysteine = [E1 ubiquitin-activating enzyme]-L-cysteine + S-ubiquitinyl-[E2 ubiquitin-conjugating enzyme]-L-cysteine.. It functions in the pathway protein modification; protein ubiquitination. In terms of biological role, E2 ubiquitin-conjugating enzyme that catalyzes the covalent attachment of ubiquitin to other proteins. Mediates the selective degradation of short-lived and abnormal proteins. Mediates ubiquitination of PEX5. In Saccharomyces cerevisiae (strain ATCC 204508 / S288c) (Baker's yeast), this protein is Ubiquitin-conjugating enzyme E2 4.